The primary structure comprises 250 residues: Nuclear transcription factor Y subunit C-4 (250 aa).

A compositionally biased stretch (low complexity) spans 1 to 10; it reads MDNNNNNNNQ. Disordered stretches follow at residues 1-35 and 209-250; these read MDNNNNNNNQQPPPTSVYPPGSAVTTVIPPPPSGS and GVYA…DSQG. Residues 214-225 are compositionally biased toward polar residues; the sequence is PPSQAWQSVWQN. The segment covering 227–242 has biased composition (gly residues); sequence AGGGDDVSYGSGGSSG.

Belongs to the NFYC/HAP5 subunit family. As to quaternary structure, heterotrimeric transcription factor composed of three components, NF-YA, NF-YB and NF-YC. NF-YB and NF-YC must interact and dimerize for NF-YA association and DNA binding. Ubiquitous. Present in etiolated seedlings.

The protein resides in the nucleus. Its function is as follows. Stimulates the transcription of various genes by recognizing and binding to a CCAAT motif in promoters. Involved in the abscisic acid (ABA) signaling pathway. This is Nuclear transcription factor Y subunit C-4 (NFYC4) from Arabidopsis thaliana (Mouse-ear cress).